Here is a 413-residue protein sequence, read N- to C-terminus: Histidine--tRNA ligase (413 aa).

This sequence belongs to the class-II aminoacyl-tRNA synthetase family. In terms of assembly, homodimer.

It localises to the cytoplasm. It carries out the reaction tRNA(His) + L-histidine + ATP = L-histidyl-tRNA(His) + AMP + diphosphate + H(+). The protein is Histidine--tRNA ligase of Fusobacterium nucleatum subsp. nucleatum (strain ATCC 25586 / DSM 15643 / BCRC 10681 / CIP 101130 / JCM 8532 / KCTC 2640 / LMG 13131 / VPI 4355).